Consider the following 395-residue polypeptide: MNNSEWANKNYYADLGVSSSASEDEIKKAYRKLARENHPDKNPGDKAAEDRFKKAAEAYDVLGDDKKRKEYDELKALLASGGIRGGFGSGGAGFPGGFRTSTGGFDTSDLFGGGQGGGFSTDGGLGDIFGGLFNRGAGSHQSARPTRGADVQTEITLSFVEAAKGTTIPVELTGDAPCNTCHGSGSKSGHPAKCGTCDGTGFTSENKGAFGFSAPCATCGGTGEIITDPCDNCHGRGTVRKSRSITVRIPTGVEDGQKVRLAGQGEAGPNGKPAGDLFVKVHVKKDDVFTRDGSNILITIPVSFSELALGGAISVPTLNKPVKLKLPAGTPDGRTLRVRGRGIEARDSTGDLLVTVQVSVPKNLDDNAAEALRAYAEAETNSGFDPRANWAGQNR.

One can recognise a J domain in the interval 10–75 (NYYADLGVSS…KKRKEYDELK (66 aa)). The segment at 165-242 (GTTIPVELTG…CHGRGTVRKS (78 aa)) adopts a CR-type zinc-finger fold. Positions 178, 181, 194, 197, 216, 219, 230, and 233 each coordinate Zn(2+). 4 CXXCXGXG motif repeats span residues 178–185 (CNTCHGSG), 194–201 (CGTCDGTG), 216–223 (CATCGGTG), and 230–237 (CDNCHGRG).

It belongs to the DnaJ family. In terms of assembly, homodimer. The cofactor is Zn(2+).

The protein resides in the cytoplasm. In terms of biological role, participates actively in the response to hyperosmotic and heat shock by preventing the aggregation of stress-denatured proteins and by disaggregating proteins, also in an autonomous, DnaK-independent fashion. Unfolded proteins bind initially to DnaJ; upon interaction with the DnaJ-bound protein, DnaK hydrolyzes its bound ATP, resulting in the formation of a stable complex. GrpE releases ADP from DnaK; ATP binding to DnaK triggers the release of the substrate protein, thus completing the reaction cycle. Several rounds of ATP-dependent interactions between DnaJ, DnaK and GrpE are required for fully efficient folding. Also involved, together with DnaK and GrpE, in the DNA replication of plasmids through activation of initiation proteins. This is Chaperone protein DnaJ 2 from Corynebacterium glutamicum (strain ATCC 13032 / DSM 20300 / JCM 1318 / BCRC 11384 / CCUG 27702 / LMG 3730 / NBRC 12168 / NCIMB 10025 / NRRL B-2784 / 534).